The following is a 585-amino-acid chain: Amyloid protein-binding protein 2 (585 aa).

TPR repeat units follow at residues 50–83 (QGRLCQLGSEFCELEVFAKVLRALDKRHLLHHCF), 120–153 (IQVGFVLGGFLSDAGWYSDAEKVFLSCLQLCTLH), 206–239 (AALYGELCALLFAKSHYDEAYKWCVEAMKEITSG), 288–321 (SDTLLDYGFYLLNVDNICQSVAIYQAALDIRQSV), 333–367 (HEDLAYSSYVHQYSSGKFDNALFHAERAIGIITHI), 429–462 (AKHYGNLGRLYQSMRKFKEAEEMHIKAIQIKEQL), 471–505 (ALSVGHLASLYNYDMNQYENAEKLYLRSIAIGKKL), and 514–547 (EYDYRGLIKLYNSTGNYEKVFEYHNVLSNWNRLR).

In terms of assembly, component of a CRL2 E3 ubiquitin-protein ligase complex, also named ECS (Elongin BC-CUL2/5-SOCS-box protein) complex, composed of CUL2, Elongin BC (ELOB and ELOC), RBX1 and substrate-specific adapter APPBP2. Interacts with APP; APP interaction inhibits the E3 ubiquitin-protein ligase activity of the CRL2(APPBP2) complex. Rapidly degraded by the proteasome upon overexpression of a C-terminal fragment of APP.

It localises to the nucleus. The protein resides in the cytoplasm. Its subcellular location is the cytoskeleton. The protein localises to the membrane. The protein operates within protein modification; protein ubiquitination. With respect to regulation, E3 ubiquitin-protein ligase activity of the CRL2(APPBP2) complex is inhibited by APP. Its function is as follows. Substrate-recognition component of a Cul2-RING (CRL2) E3 ubiquitin-protein ligase complex of the DesCEND (destruction via C-end degrons) pathway, which recognizes a C-degron located at the extreme C terminus of target proteins, leading to their ubiquitination and degradation. The C-degron recognized by the DesCEND pathway is usually a motif of less than ten residues and can be present in full-length proteins, truncated proteins or proteolytically cleaved forms. The CRL2(APPBP2) complex specifically recognizes proteins with a -Arg-Xaa-Xaa-Gly degron at the C-terminus, leading to their ubiquitination and degradation. The CRL2(APPBP2) complex mediates ubiquitination and degradation of truncated SELENOV selenoproteins produced by failed UGA/Sec decoding, which end with a -Arg-Xaa-Xaa-Gly degron. May play a role in intracellular protein transport: may be involved in the translocation of APP along microtubules toward the cell surface. The polypeptide is Amyloid protein-binding protein 2 (Rattus norvegicus (Rat)).